Reading from the N-terminus, the 356-residue chain is Heparan sulfate 2-O-sulfotransferase 1 (356 aa).

Residues 1 to 11 are Cytoplasmic-facing; the sequence is MGLLRIMMPPK. Residues 12 to 28 form a helical; Signal-anchor for type II membrane protein membrane-spanning segment; it reads LQLLAVVAFAVAMLFLE. Positions 24-51 form a coiled coil; it reads MLFLENQIQKLEESRAKLERAIARHEVR. Topologically, residues 29 to 356 are lumenal; it reads NQIQKLEESR…FYEKIYPKSN (328 aa). K83, T84, A85, S86, T87, and S88 together coordinate adenosine 3',5'-bisphosphate. N-linked (GlcNAc...) asparagine glycans are attached at residues N108 and N127. Catalysis depends on residues H140 and H142. Positions 164 and 172 each coordinate adenosine 3',5'-bisphosphate. Disulfide bonds link C201–C209 and C222–C228. Adenosine 3',5'-bisphosphate is bound by residues Y279, S285, T290, and K293.

It belongs to the sulfotransferase 3 family. As to quaternary structure, homotrimer. Interacts with the C5-epimerase GLCE. Post-translationally, N-glycosylated. In terms of tissue distribution, widely expressed. Expressed at higher level in lung and brain. Weakly expressed in spleen.

It is found in the golgi apparatus membrane. Functionally, catalyzes the transfer of a sulfo group from 3'-phospho-5'-adenylyl sulfate (PAPS) to the 2-OH position of iduronic acid (IdoA) or glucuronic acid (GlcA) within the heparan sulfate (HS) chain and participates in HS biosynthesis. Required for metanephric development of kidney formation, suggesting that 2-O-sulfation within HS is essential for signaling between ureteric bud and metanephric mesenchyme. In Mus musculus (Mouse), this protein is Heparan sulfate 2-O-sulfotransferase 1.